An 88-amino-acid chain; its full sequence is DNA-directed RNA polymerase subunit omega (88 aa).

Belongs to the RNA polymerase subunit omega family. As to quaternary structure, the RNAP catalytic core consists of 2 alpha, 1 beta, 1 beta' and 1 omega subunit. When a sigma factor is associated with the core the holoenzyme is formed, which can initiate transcription.

It catalyses the reaction RNA(n) + a ribonucleoside 5'-triphosphate = RNA(n+1) + diphosphate. Promotes RNA polymerase assembly. Latches the N- and C-terminal regions of the beta' subunit thereby facilitating its interaction with the beta and alpha subunits. This chain is DNA-directed RNA polymerase subunit omega, found in Clostridioides difficile (strain 630) (Peptoclostridium difficile).